The primary structure comprises 153 residues: uncharacterized protein (153 aa).

An N-terminal signal peptide occupies residues 1-22; the sequence is MKAFNKLFSLVVASVLVFSLAG. The N-palmitoyl cysteine moiety is linked to residue cysteine 23. Cysteine 23 carries the S-diacylglycerol cysteine lipid modification.

This sequence to L.monocytogenes lmo0207.

The protein resides in the cell membrane. This is an uncharacterized protein from Escherichia coli (strain K12).